A 498-amino-acid chain; its full sequence is Succinate-semialdehyde dehydrogenase [NADP(+)] 1 (498 aa).

Residue 247–252 (GSTNVG) participates in NAD(+) binding. Catalysis depends on residues E269 and C303.

Belongs to the aldehyde dehydrogenase family. Homotetramer.

Its subcellular location is the cytoplasm. It carries out the reaction succinate semialdehyde + NAD(+) + H2O = succinate + NADH + 2 H(+). The enzyme catalyses succinate semialdehyde + NADP(+) + H2O = succinate + NADPH + 2 H(+). It functions in the pathway amino-acid degradation; 4-aminobutanoate degradation. Catalyzes the oxidation of succinate semialdehyde to succinate. Can utilize both NAD(+) or NADP(+) as a coenzyme. Functions in a gamma-aminobutyrate (GABA) degradation pathway that allows growth utilizing GABA as a nitrogen source. Functions in the GABA shunt, which allows to bypass 2 reactions in the TCA cycle by removing alpha-ketoglutarate from the cycle and feeding succinate and NADH back into the cycle. This Schizosaccharomyces pombe (strain 972 / ATCC 24843) (Fission yeast) protein is Succinate-semialdehyde dehydrogenase [NADP(+)] 1 (ssd1).